The following is a 254-amino-acid chain: Type III pantothenate kinase (254 aa).

Position 6-13 (6-13) interacts with ATP; the sequence is DLGNSAIK. Substrate-binding positions include tyrosine 99 and 106-109; that span reads GVDR. Residue aspartate 108 is the Proton acceptor of the active site. Aspartate 128 is a K(+) binding site. Residue threonine 131 participates in ATP binding. Threonine 182 contributes to the substrate binding site.

This sequence belongs to the type III pantothenate kinase family. In terms of assembly, homodimer. It depends on NH4(+) as a cofactor. The cofactor is K(+).

It is found in the cytoplasm. It catalyses the reaction (R)-pantothenate + ATP = (R)-4'-phosphopantothenate + ADP + H(+). The protein operates within cofactor biosynthesis; coenzyme A biosynthesis; CoA from (R)-pantothenate: step 1/5. Its function is as follows. Catalyzes the phosphorylation of pantothenate (Pan), the first step in CoA biosynthesis. The protein is Type III pantothenate kinase of Halorhodospira halophila (strain DSM 244 / SL1) (Ectothiorhodospira halophila (strain DSM 244 / SL1)).